The following is a 106-amino-acid chain: UPF0145 protein MA_3383 (106 aa).

It belongs to the UPF0145 family.

This Methanosarcina acetivorans (strain ATCC 35395 / DSM 2834 / JCM 12185 / C2A) protein is UPF0145 protein MA_3383.